Here is a 212-residue protein sequence, read N- to C-terminus: Large ribosomal subunit protein uL1 (212 aa).

It belongs to the universal ribosomal protein uL1 family. In terms of assembly, part of the 50S ribosomal subunit.

Its function is as follows. Binds directly to 23S rRNA. Probably involved in E site tRNA release. Protein L1 is also a translational repressor protein, it controls the translation of its operon by binding to its mRNA. This Methanobrevibacter smithii (strain ATCC 35061 / DSM 861 / OCM 144 / PS) protein is Large ribosomal subunit protein uL1.